We begin with the raw amino-acid sequence, 41 residues long: Large ribosomal subunit protein bL36 (41 aa).

It belongs to the bacterial ribosomal protein bL36 family.

The chain is Large ribosomal subunit protein bL36 from Gluconacetobacter diazotrophicus (strain ATCC 49037 / DSM 5601 / CCUG 37298 / CIP 103539 / LMG 7603 / PAl5).